The primary structure comprises 418 residues: Pigment epithelium-derived factor (418 aa).

A signal peptide spans 1 to 19 (MQALVLLLCIGALLGHSSC). Pyrrolidone carboxylic acid is present on Q20. A disordered region spans residues 20-39 (QNPASPPEEGSPDPDSTGAL). Phosphoserine; by CK2 is present on residues S24 and S114. Residue S227 is modified to Phosphoserine; by PKA. The N-linked (GlcNAc...) (complex) asparagine glycan is linked to N285. Residues 371-383 (TTPSPGLQPAHLT) are O-glycosylated at one site.

This sequence belongs to the serpin family. As to quaternary structure, interacts with PNPLA2; this interaction stimulates the phospholipase A2 activity of PNPLA2. Post-translationally, the N-terminus is blocked. Extracellular phosphorylation enhances antiangiogenic activity. In terms of processing, N- and O-glycosylated. O-glycosylated with a core 1 or possibly core 8 glycan. Retinal pigment epithelial cells and blood plasma.

Its subcellular location is the secreted. It localises to the melanosome. Its function is as follows. Neurotrophic protein; induces extensive neuronal differentiation in retinoblastoma cells. Potent inhibitor of angiogenesis. As it does not undergo the S (stressed) to R (relaxed) conformational transition characteristic of active serpins, it exhibits no serine protease inhibitory activity. This is Pigment epithelium-derived factor (SERPINF1) from Homo sapiens (Human).